A 171-amino-acid chain; its full sequence is Co-chaperone protein HscB (171 aa).

In terms of domain architecture, J spans 2–74; it reads DYFTLFGLPA…LTRAEYLLSL (73 aa).

The protein belongs to the HscB family. In terms of assembly, interacts with HscA and stimulates its ATPase activity. Interacts with IscU.

Functionally, co-chaperone involved in the maturation of iron-sulfur cluster-containing proteins. Seems to help targeting proteins to be folded toward HscA. This is Co-chaperone protein HscB from Salmonella choleraesuis (strain SC-B67).